Reading from the N-terminus, the 402-residue chain is Alkaline proteinase (402 aa).

A signal peptide spans 1 to 20 (MVTLRRLAVLLGAIPAALAA). A propeptide spanning residues 21-120 (PTTQKREVVP…EQDEGEFSTA (100 aa)) is cleaved from the precursor. The region spanning 32-108 (KYIVTLKEGA…EVEEDQIWHL (77 aa)) is the Inhibitor I9 domain. A Peptidase S8 domain is found at 128-402 (AWGLGTISHR…NRILYNGNGA (275 aa)). Catalysis depends on charge relay system residues aspartate 160, histidine 191, and serine 347. The segment covering 382–392 (GRVSNPGSGSP) has biased composition (polar residues). A disordered region spans residues 382–402 (GRVSNPGSGSPNRILYNGNGA).

Belongs to the peptidase S8 family.

In Hapsidospora chrysogena (Acremonium chrysogenum), this protein is Alkaline proteinase (ALP).